The primary structure comprises 258 residues: Acyl-[acyl-carrier-protein]--UDP-N-acetylglucosamine O-acyltransferase (258 aa).

The protein belongs to the transferase hexapeptide repeat family. LpxA subfamily. As to quaternary structure, homotrimer.

It localises to the cytoplasm. It carries out the reaction a (3R)-hydroxyacyl-[ACP] + UDP-N-acetyl-alpha-D-glucosamine = a UDP-3-O-[(3R)-3-hydroxyacyl]-N-acetyl-alpha-D-glucosamine + holo-[ACP]. Its pathway is glycolipid biosynthesis; lipid IV(A) biosynthesis; lipid IV(A) from (3R)-3-hydroxytetradecanoyl-[acyl-carrier-protein] and UDP-N-acetyl-alpha-D-glucosamine: step 1/6. Involved in the biosynthesis of lipid A, a phosphorylated glycolipid that anchors the lipopolysaccharide to the outer membrane of the cell. This Pseudomonas entomophila (strain L48) protein is Acyl-[acyl-carrier-protein]--UDP-N-acetylglucosamine O-acyltransferase.